The chain runs to 216 residues: Orotate phosphoribosyltransferase (216 aa).

Residues Arg-101, Lys-105, His-107, and 127–135 (EDLISTGGS) each bind 5-phospho-alpha-D-ribose 1-diphosphate. An orotate-binding site is contributed by Ser-131.

The protein belongs to the purine/pyrimidine phosphoribosyltransferase family. PyrE subfamily. As to quaternary structure, homodimer. Requires Mg(2+) as cofactor.

It carries out the reaction orotidine 5'-phosphate + diphosphate = orotate + 5-phospho-alpha-D-ribose 1-diphosphate. The protein operates within pyrimidine metabolism; UMP biosynthesis via de novo pathway; UMP from orotate: step 1/2. Catalyzes the transfer of a ribosyl phosphate group from 5-phosphoribose 1-diphosphate to orotate, leading to the formation of orotidine monophosphate (OMP). The protein is Orotate phosphoribosyltransferase of Cutibacterium acnes (strain DSM 16379 / KPA171202) (Propionibacterium acnes).